A 618-amino-acid polypeptide reads, in one-letter code: Uptake hydrogenase large subunit (618 aa).

Ni(2+) is bound by residues cysteine 75, cysteine 78, cysteine 597, and cysteine 600.

It belongs to the [NiFe]/[NiFeSe] hydrogenase large subunit family. Heterodimer of a large and a small subunit. Ni(2+) is required as a cofactor.

It localises to the cell membrane. It carries out the reaction H2 + A = AH2. Its function is as follows. This enzyme recycles the H(2) produced by nitrogenase to increase the production of ATP and to protect nitrogenase against inhibition or damage by O(2) under carbon- or phosphate-limited conditions. In Rubrivivax gelatinosus (Rhodocyclus gelatinosus), this protein is Uptake hydrogenase large subunit (hupB).